Consider the following 866-residue polypeptide: Potassium voltage-gated channel subfamily KQT member 3 (866 aa).

The interval 1–42 is disordered; sequence MGLKARRPAGAAGGGGDGGGGGGGAANPAGGDAAAAGDEERK. The Cytoplasmic portion of the chain corresponds to 1-120; sequence MGLKARRPAG…IYDALERPRG (120 aa). Residues 11-25 are compositionally biased toward gly residues; that stretch reads AAGGGGDGGGGGGGA. The span at 26-36 shows a compositional bias: low complexity; that stretch reads ANPAGGDAAAA. At threonine 81 the chain carries Phosphothreonine. The helical transmembrane segment at 121 to 143 threads the bilayer; the sequence is WALLYHALVFLIVLGCLILAVLT. Topologically, residues 144-153 are extracellular; that stretch reads TFREYETVSG. Residues 154 to 175 traverse the membrane as a helical segment; that stretch reads DWLLLLETFAIFIFGAEFALRI. Over 176–193 the chain is Cytoplasmic; sequence WAAGCCCRYKGWRGRLKF. A helical transmembrane segment spans residues 194–213; it reads ARKPLCMLDIFVLIASVPVV. The Extracellular segment spans residues 214 to 225; sequence AVGNQGNVLATS. The helical; Voltage-sensor transmembrane segment at 226 to 244 threads the bilayer; the sequence is LRSLRFLQILRMLRMDRRG. An a 1,2-diacyl-sn-glycero-3-phospho-(1D-myo-inositol-4,5-bisphosphate)-binding site is contributed by arginine 243. Residues 245-256 lie on the Cytoplasmic side of the membrane; the sequence is GTWKLLGSAICA. A helical transmembrane segment spans residues 257–282; the sequence is HSKELITAWYIGFLTLILSSFLVYLV. Residue lysine 259 participates in a 1,2-diacyl-sn-glycero-3-phospho-(1D-myo-inositol-4,5-bisphosphate) binding. Topologically, residues 283–302 are extracellular; the sequence is EKDVPEVDAQGEEMKEEFET. The segment at residues 303–315 is an intramembrane region (pore-forming); it reads YADALWWGLITLA. A Selectivity filter motif is present at residues 316–321; it reads TIGYGD. At 316–326 the chain is on the extracellular side; sequence TIGYGDKTPKT. The helical transmembrane segment at 327–353 threads the bilayer; the sequence is WEGRLIAATFSLIGVSFFALPAGILGS. The Cytoplasmic portion of the chain corresponds to 354-866; that stretch reads GLALKVQEQH…SIWTPSGKPT (513 aa). The segment at 356–537 is mediates interaction with calmodulin; it reads ALKVQEQHRQ…RLYKKKFKET (182 aa). Lysine 366 provides a ligand contact to a 1,2-diacyl-sn-glycero-3-phospho-(1D-myo-inositol-4,5-bisphosphate). Disordered regions lie at residues 574-617, 656-676, and 757-866; these read PGPP…EDQS, GFSP…EDRR, and QVEL…GKPT. A compositionally biased stretch (polar residues) spans 837 to 866; sequence EPFTPSGSLPLSSTGDGISDSIWTPSGKPT.

The protein belongs to the potassium channel family. KQT (TC 1.A.1.15) subfamily. Kv7.3/KCNQ3 sub-subfamily. Heterotetramer with KCNQ2; forms heterotetrameric native M-channel responsible for the M-current. Interacts with calmodulin; the interaction is calcium-independent, constitutive and participates in the proper assembly of a functional M-channel. Heteromultimer with KCNQ5. May associate with KCNE2. Interacts with IQCJ-SCHIP1. Interacts (via the pore module) with SLC5A3/SMIT1; forms a coregulatory complex that alters ion selectivity, voltage dependence and gating kinetics of the channel. KCNQ2/KCNQ3 are ubiquitinated by NEDD4L. Ubiquitination leads to protein degradation. Degradation induced by NEDD4L is inhibited by USP36.

It is found in the cell membrane. It catalyses the reaction K(+)(in) = K(+)(out). The catalysed reaction is Rb(+)(in) = Rb(+)(out). The enzyme catalyses Cs(+)(in) = Cs(+)(out). It carries out the reaction Na(+)(in) = Na(+)(out). Phosphatidylinositol-4,5-bisphosphate (PIP2) potentiates the activation of KCNQ channels by enhancing the electro-mechanical coupling of the voltage-sensing domain (VSD) and the pore-forming domain (PD). In the closed state of the channel, PIP2 is anchored at the S2-S3 loop; upon channel activation, PIP2 interacts with the S4-S5 linker and is involved in channel gating. Calcium suppresses KCNQ2-KCNQ3 channel currents, with calcium-bound calmodulin inducing a change in channel configuration which leads to the reduction of channel affinity for PIP2 and subsequent current suppression. Functionally, pore-forming subunit of the voltage-gated potassium (Kv) M-channel which is responsible for the M-current, a key controller of neuronal excitability. M-channel is composed of pore-forming subunits KCNQ2 and KCNQ3 assembled as heterotetramers. The native M-current has a slowly activating and deactivating potassium conductance which plays a critical role in determining the subthreshold electrical excitability of neurons as well as the responsiveness to synaptic inputs. M-channel is selectively permeable in vitro to other cations besides potassium, in decreasing order of affinity K(+) &gt; Rb(+) &gt; Cs(+) &gt; Na(+). M-channel association with SLC5A3/SMIT1 alters channel ion selectivity, increasing Na(+) and Cs(+) permeation relative to K(+). Suppressed by activation of M1 muscarinic acetylcholine receptors. KCNQ3 also associates with KCNQ5 to form a functional channel in vitro and may also contribute to the M-current in brain. This Bos taurus (Bovine) protein is Potassium voltage-gated channel subfamily KQT member 3.